A 515-amino-acid chain; its full sequence is Cytoplasmic dynein 1 light intermediate chain 1 (515 aa).

The segment covering 1–24 (MAAVGRAGSFGSSSASGAANNASA) has biased composition (low complexity). The tract at residues 1–34 (MAAVGRAGSFGSSSASGAANNASAELRAGGEEDD) is disordered. 64 to 71 (GEDGAGKT) is a binding site for ATP. Disordered stretches follow at residues 370–424 (QSQL…DPNM) and 445–515 (KTGS…GEAS). Residues 397-409 (RTPNRSVTSNVAS) show a composition bias toward polar residues. Over residues 448–468 (SPGGPGGVGGSPGGGSAGGTG) the composition is skewed to gly residues. The segment covering 490–499 (ELDRISRKPE) has biased composition (basic and acidic residues). Residues 502–515 (SPTSPTSPTEGEAS) are compositionally biased toward polar residues.

It belongs to the dynein light intermediate chain family. Homodimer. The cytoplasmic dynein 1 complex consists of two catalytic heavy chains (HCs) and a number of non-catalytic subunits presented by intermediate chains (ICs). In terms of processing, phosphorylated.

It is found in the cytoplasm. The protein localises to the cytoskeleton. It localises to the chromosome. Its subcellular location is the centromere. The protein resides in the kinetochore. It is found in the spindle pole. The protein localises to the recycling endosome membrane. Functionally, acts as one of several non-catalytic accessory components of the cytoplasmic dynein 1 complex that are thought to be involved in linking dynein to cargos and to adapter proteins that regulate dynein function. Cytoplasmic dynein 1 acts as a motor for the intracellular retrograde motility of vesicles and organelles along microtubules. May play a role in binding dynein to membranous organelles or chromosomes. May regulate the movement of peripheral sorting endosomes along microtubule tracks toward the microtubule organizing center/centrosome, generating the endosomal recycling compartment. The sequence is that of Cytoplasmic dynein 1 light intermediate chain 1 (DYNC1LI1) from Gallus gallus (Chicken).